The sequence spans 1102 residues: MTYQKLNVNTYSNLQIFNMPDLIEIQRASFRWFLEYGLIEELDSYSPITDYTGKLELHFIAKNYKLKQPKYSVEESKRRDSSYAVQMYVPTRLINKETGEIKEQEVFIGDLPLMTDRGTFIINGAERVIVNQIVRSPGVYYKSETDKSGRRTYNASLIPNRGAWLKFETDKNDLVWVRIDKTRKLSAQVLLKALGLGDSEIFDSLRHPDYFQKTIEKEGQYGEEEALLELYRKLRPGEPPTIAGGEQLLHSRFFDQKRYDLGQVGRYKLNNKLRLNLPNTVRVLTKEDILASIDYLINLEYDIGQTDDIDHLGNRRVRSVGELLQNQIRVGLNRLERIIRERMTVSESETLTPTSLVNPKPLVAAIKEFFGSSQLSQFMDQTNPLAELTHKRRISALGPGGLTRERAGFAVRDIHPSHYGRICPIETPEGPNAGLIGSLANHAKVNSYGFIETPYYPVENGRVLRDRTPIYMTADAEDDLRVAPGDIMTDAEGKILGDVVPVRYRQDFTTTNPQQVDYVAVSPVQVVSVATSLIPFLEHDDANRALMGSNMQRQAVPLLNPDRPLVGTGLEPQAARDSGMVVVTRTDGEVSYVDSTKISVIDKEGNQADYPLCKYQRSNQDTCLNQRPLVFEGDQVVAGQVLADGSSTEGAELALGQNVLVAYMPWEGYNYEDAILISERLVYDDVYTSIHIEKFEIEARQTKLGPEEITREIPNVGEDGLRNLDEQGIIRVGAWVQSGDILVGKVTPKGESDQPPEEKLLRAIFGEKARDVRDNSLRVPNGEKGRIVDVRVFTREKGDELPPGANMVVRVYVAQKRKIQVGDKVAGRHGNKGIISRILPIEDMPYLPDGTPIDVVLNPLGVPSRMNVGQIFECLLGWAGEILSVRFKCVPFDEMHGPEKSRETVHLMLKLARDNSGKDWVFDEKHPGKIWVFDGRTGERFDRPVTVGIAYMLKLVHLVDDKIHARSTGPYSLVTQQPLGGKAQQGGQRFGEMEVWALEAFGAAYTLQELLTVKSDDMQGRNEALNAIVKGKAIPRPGTPESFKVLMRELQSLCLDIAAHKVETVDDGTTQDVEVDLMADLPGKRTPSRPIYESLSTEGNQD.

Residues 1081 to 1102 (LPGKRTPSRPIYESLSTEGNQD) are disordered.

The protein belongs to the RNA polymerase beta chain family. In cyanobacteria the RNAP catalytic core is composed of 2 alpha, 1 beta, 1 beta', 1 gamma and 1 omega subunit. When a sigma factor is associated with the core the holoenzyme is formed, which can initiate transcription.

It catalyses the reaction RNA(n) + a ribonucleoside 5'-triphosphate = RNA(n+1) + diphosphate. DNA-dependent RNA polymerase catalyzes the transcription of DNA into RNA using the four ribonucleoside triphosphates as substrates. The sequence is that of DNA-directed RNA polymerase subunit beta from Trichodesmium erythraeum (strain IMS101).